We begin with the raw amino-acid sequence, 419 residues long: UDP-N-acetylglucosamine 1-carboxyvinyltransferase 2 (419 aa).

22–23 (KN) contacts phosphoenolpyruvate. R92 provides a ligand contact to UDP-N-acetyl-alpha-D-glucosamine. The active-site Proton donor is the C116. At C116 the chain carries 2-(S-cysteinyl)pyruvic acid O-phosphothioketal. Residues 121–125 (RPIDL), D306, and V328 each bind UDP-N-acetyl-alpha-D-glucosamine.

It belongs to the EPSP synthase family. MurA subfamily.

Its subcellular location is the cytoplasm. It catalyses the reaction phosphoenolpyruvate + UDP-N-acetyl-alpha-D-glucosamine = UDP-N-acetyl-3-O-(1-carboxyvinyl)-alpha-D-glucosamine + phosphate. Its pathway is cell wall biogenesis; peptidoglycan biosynthesis. Cell wall formation. Adds enolpyruvyl to UDP-N-acetylglucosamine. This Carboxydothermus hydrogenoformans (strain ATCC BAA-161 / DSM 6008 / Z-2901) protein is UDP-N-acetylglucosamine 1-carboxyvinyltransferase 2.